Consider the following 471-residue polypeptide: Vanillate/3-O-methylgallate O-demethylase (471 aa).

Tyrosine 31 is a substrate binding site. Glutamine 57 lines the (6S)-5,6,7,8-tetrahydrofolate pocket. Position 60 (histidine 60) interacts with substrate. (6S)-5,6,7,8-tetrahydrofolate is bound by residues glutamine 93 and valine 120. Position 122 (arginine 122) interacts with substrate. (6S)-5,6,7,8-tetrahydrofolate is bound by residues glutamine 165 and glutamate 215. A substrate-binding site is contributed by 247–250; it reads YPSN. (6S)-5,6,7,8-tetrahydrofolate is bound at residue tryptophan 256.

Belongs to the GcvT family. As to quaternary structure, homodimer.

It catalyses the reaction vanillate + (6S)-5,6,7,8-tetrahydrofolate = (6S)-5-methyl-5,6,7,8-tetrahydrofolate + 3,4-dihydroxybenzoate. The enzyme catalyses 3-O-methylgallate + (6S)-5,6,7,8-tetrahydrofolate = 3,4,5-trihydroxybenzoate + (6S)-5-methyl-5,6,7,8-tetrahydrofolate. It participates in secondary metabolite metabolism; lignin degradation. Involved in the catabolism of vanillate and syringate. Catalyzes the transfer of a methyl moiety from vanillate or 3-O-methylgallate (3MGA) to tetrahydrofolate, forming protocatechuate (PCA) or gallate, respectively, and methyl-tetrahydrofolate. Has similar activities with both substrates. Cannot use syringate. Uses an ordered, sequential kinetic mechanism. The polypeptide is Vanillate/3-O-methylgallate O-demethylase (Sphingobium sp. (strain NBRC 103272 / SYK-6)).